Reading from the N-terminus, the 226-residue chain is MPTPSSGLSCNGVAVGPVLRANDLAFSRGGRPVFTGIDFSVSAGGVIQVVGPNGSGKSSLLRVLSGLLQPASGSVSWLGKCVRAGDPAYLQSLAYVGHADGIDTDLTADEHLRYAARLTGLHATNETVRVALARLGIAKTMHVPIRTLSQGQRRRVALARLALVWRALWLLDEPLTSLDDESAACFHDLLDEHLRDGGMAVIATHRLLPGGGEVLQLGGAHALPPA.

The ABC transporter domain maps to 19 to 226 (LRANDLAFSR…LGGAHALPPA (208 aa)). 51-58 (GPNGSGKS) is a binding site for ATP.

Belongs to the ABC transporter superfamily. CcmA exporter (TC 3.A.1.107) family. In terms of assembly, the complex is composed of two ATP-binding proteins (CcmA) and two transmembrane proteins (CcmB).

The protein localises to the cell inner membrane. It catalyses the reaction heme b(in) + ATP + H2O = heme b(out) + ADP + phosphate + H(+). In terms of biological role, part of the ABC transporter complex CcmAB involved in the biogenesis of c-type cytochromes; once thought to export heme, this seems not to be the case, but its exact role is uncertain. Responsible for energy coupling to the transport system. The chain is Cytochrome c biogenesis ATP-binding export protein CcmA from Cupriavidus pinatubonensis (strain JMP 134 / LMG 1197) (Cupriavidus necator (strain JMP 134)).